The chain runs to 573 residues: Anti-Muellerian hormone type-2 receptor (573 aa).

A signal peptide spans 1 to 17 (MLGSLGLWALLPTAVEA). Residues 18-149 (PPNRRTCVFF…APGESIWMAL (132 aa)) are Extracellular-facing. 2 cysteine pairs are disulfide-bonded: cysteine 55–cysteine 79 and cysteine 92–cysteine 109. Asparagine 66 is a glycosylation site (N-linked (GlcNAc...) asparagine). Asparagine 119 carries N-linked (GlcNAc...) asparagine glycosylation. A helical transmembrane segment spans residues 150-170 (VLLGLFLLLLLLLGSIILALL). The Cytoplasmic portion of the chain corresponds to 171–573 (QRKNYRVRGE…PQPACTLSPV (403 aa)). A Protein kinase domain is found at 203 to 518 (LCFSQVIREG…AHPQESHPFP (316 aa)). Residues 209-217 (IREGGHAVV) and lysine 230 each bind ATP. Aspartate 333 (proton acceptor) is an active-site residue.

It belongs to the protein kinase superfamily. TKL Ser/Thr protein kinase family. TGFB receptor subfamily. In terms of assembly, interacts with type I receptor ACVR1. The cofactor is Mg(2+). It depends on Mn(2+) as a cofactor.

The protein resides in the membrane. The enzyme catalyses L-threonyl-[receptor-protein] + ATP = O-phospho-L-threonyl-[receptor-protein] + ADP + H(+). It carries out the reaction L-seryl-[receptor-protein] + ATP = O-phospho-L-seryl-[receptor-protein] + ADP + H(+). In terms of biological role, on ligand binding, forms a receptor complex consisting of two type II and two type I transmembrane serine/threonine kinases. Type II receptors phosphorylate and activate type I receptors which autophosphorylate, then bind and activate SMAD transcriptional regulators. Receptor for anti-Muellerian hormone. In Homo sapiens (Human), this protein is Anti-Muellerian hormone type-2 receptor (AMHR2).